The following is a 494-amino-acid chain: Guanosine-5'-triphosphate,3'-diphosphate pyrophosphatase (494 aa).

This sequence belongs to the GppA/Ppx family. GppA subfamily.

It catalyses the reaction guanosine 3'-diphosphate 5'-triphosphate + H2O = guanosine 3',5'-bis(diphosphate) + phosphate + H(+). Its pathway is purine metabolism; ppGpp biosynthesis; ppGpp from GTP: step 2/2. Its function is as follows. Catalyzes the conversion of pppGpp to ppGpp. Guanosine pentaphosphate (pppGpp) is a cytoplasmic signaling molecule which together with ppGpp controls the 'stringent response', an adaptive process that allows bacteria to respond to amino acid starvation, resulting in the coordinated regulation of numerous cellular activities. This Shigella flexneri serotype 5b (strain 8401) protein is Guanosine-5'-triphosphate,3'-diphosphate pyrophosphatase.